A 269-amino-acid chain; its full sequence is MEVFRIYTNSPLRNFTYILRNSETSETLSIDPYDSEQIEKFLDSKGWTLDFLLNTHEHEDHTSGNTGLVQRYGCTVYSHPEGIGKIPHATHPLKKGDFLLRSSKEYLEILDTPGHTFCHVCLLLVENQKPKAIFTGDTIFNAGVGNCHHGGDPEVLAKTILEQFYPLEEEILLYPGHDYLETNLKFTLSLDPSNQDAIRTLEECSRLSKNVEFLTTDLRKERKINTFFQCDKPSLELRKNVSKKIPFKQLLDNDPTSFFISLRSLRDQW.

Zn(2+) is bound by residues His-56, His-58, Asp-60, His-61, His-115, Asp-137, and His-177.

This sequence belongs to the metallo-beta-lactamase superfamily. Glyoxalase II family. As to quaternary structure, monomer. The cofactor is Zn(2+).

It carries out the reaction an S-(2-hydroxyacyl)glutathione + H2O = a 2-hydroxy carboxylate + glutathione + H(+). It functions in the pathway secondary metabolite metabolism; methylglyoxal degradation; (R)-lactate from methylglyoxal: step 2/2. Functionally, thiolesterase that catalyzes the hydrolysis of S-D-lactoyl-glutathione to form glutathione and D-lactic acid. This is Hydroxyacylglutathione hydrolase from Leptospira borgpetersenii serovar Hardjo-bovis (strain JB197).